The chain runs to 281 residues: MMNSIKFIFLGDVYGKAGRNIIKNNLAQLKSKYQADLVIVNAENTTHGKGLSLKHYEFLKEAGVNYITMGNHTWFQKLDLAVVINKKDLVRPLNLDTSFAFHNLGQGSLVFEFNKAKIRITNLLGTSVPLPFKTTNPFKVLKELILKRDCDLHIVDFHAETTSEKNAFCMAFDGYVTTIFGTHTHVPSADLRITPKGSAYITDVGMCGPGFGSVIGANPEQSIRLFCAGSREHFEVSKCGAQLNGVFFEVDVNTKKVIKTEAIRIVEDDPRYLKQDYFNLI.

Residues aspartate 12, glutamate 43, asparagine 44, and asparagine 71 each coordinate Fe cation. Residue histidine 72 is the Proton donor of the active site. The Fe cation site is built by histidine 158, histidine 183, and histidine 185.

The protein belongs to the YmdB-like family. Fe(3+) serves as cofactor.

The sequence is that of Putative phosphatase/phosphodiesterase MPN_349 from Mycoplasma pneumoniae (strain ATCC 29342 / M129 / Subtype 1) (Mycoplasmoides pneumoniae).